The sequence spans 204 residues: Inner membrane protein BB_0250 (204 aa).

The next 5 membrane-spanning stretches (helical) occupy residues 17 to 37, 58 to 78, 101 to 121, 139 to 159, and 172 to 192; these read IAYS…NVPI, ILIF…SFYI, YYYG…PFGV, FIVS…TLSF, and IKII…IIYV.

Belongs to the DedA family.

The protein resides in the cell inner membrane. Functionally, required for proper cell division and envelope integrity. This Borreliella burgdorferi (strain ATCC 35210 / DSM 4680 / CIP 102532 / B31) (Borrelia burgdorferi) protein is Inner membrane protein BB_0250.